The following is a 635-amino-acid chain: tRNA uridine 5-carboxymethylaminomethyl modification enzyme MnmG (635 aa).

19-24 contacts FAD; that stretch reads GAGHAG. 280 to 294 contacts NAD(+); the sequence is GPRYCPSIEDKIVRF.

The protein belongs to the MnmG family. In terms of assembly, homodimer. Heterotetramer of two MnmE and two MnmG subunits. It depends on FAD as a cofactor.

The protein resides in the cytoplasm. NAD-binding protein involved in the addition of a carboxymethylaminomethyl (cmnm) group at the wobble position (U34) of certain tRNAs, forming tRNA-cmnm(5)s(2)U34. In Synechocystis sp. (strain ATCC 27184 / PCC 6803 / Kazusa), this protein is tRNA uridine 5-carboxymethylaminomethyl modification enzyme MnmG.